The following is a 466-amino-acid chain: Glutamate--tRNA ligase (466 aa).

Residues 10–20 carry the 'HIGH' region motif; that stretch reads PSPTGYLHVGG. Zn(2+) contacts are provided by C99, C101, C126, and D128. Positions 237–241 match the 'KMSKS' region motif; sequence RLSKR. K240 contacts ATP.

The protein belongs to the class-I aminoacyl-tRNA synthetase family. Glutamate--tRNA ligase type 1 subfamily. As to quaternary structure, monomer. Zn(2+) is required as a cofactor.

Its subcellular location is the cytoplasm. It catalyses the reaction tRNA(Glu) + L-glutamate + ATP = L-glutamyl-tRNA(Glu) + AMP + diphosphate. In terms of biological role, catalyzes the attachment of glutamate to tRNA(Glu) in a two-step reaction: glutamate is first activated by ATP to form Glu-AMP and then transferred to the acceptor end of tRNA(Glu). The polypeptide is Glutamate--tRNA ligase (Geobacter sulfurreducens (strain ATCC 51573 / DSM 12127 / PCA)).